The sequence spans 220 residues: UPF0319 protein YccT (220 aa).

The signal sequence occupies residues 1–20; sequence MKTGALATFLALCLPVTVFA.

The protein belongs to the UPF0319 family.

The sequence is that of UPF0319 protein YccT from Salmonella paratyphi A (strain ATCC 9150 / SARB42).